The chain runs to 141 residues: Large ribosomal subunit protein uL11 (141 aa).

This sequence belongs to the universal ribosomal protein uL11 family. In terms of assembly, part of the ribosomal stalk of the 50S ribosomal subunit. Interacts with L10 and the large rRNA to form the base of the stalk. L10 forms an elongated spine to which L12 dimers bind in a sequential fashion forming a multimeric L10(L12)X complex. In terms of processing, one or more lysine residues are methylated.

Functionally, forms part of the ribosomal stalk which helps the ribosome interact with GTP-bound translation factors. This chain is Large ribosomal subunit protein uL11, found in Chlorobium luteolum (strain DSM 273 / BCRC 81028 / 2530) (Pelodictyon luteolum).